A 273-amino-acid chain; its full sequence is Cilia- and flagella-associated protein 298-B (273 aa).

Belongs to the CFAP298 family.

It is found in the cytoplasm. The protein localises to the cytoskeleton. The protein resides in the cilium basal body. Plays a role in motile cilium function, possibly by acting on outer dynein arm assembly. Seems to be important for initiation rather than maintenance of cilium motility. Required for correct positioning of the cilium at the apical cell surface, suggesting an additional role in the planar cell polarity (PCP) pathway. May suppress canonical Wnt signaling activity. The sequence is that of Cilia- and flagella-associated protein 298-B (cfap298-b) from Xenopus laevis (African clawed frog).